The primary structure comprises 451 residues: UPF0210 protein CLL_A1718 (451 aa).

It belongs to the UPF0210 family. As to quaternary structure, homodimer.

The sequence is that of UPF0210 protein CLL_A1718 from Clostridium botulinum (strain Eklund 17B / Type B).